We begin with the raw amino-acid sequence, 330 residues long: tRNA uridine(34) hydroxylase (330 aa).

The region spanning Ser123–Ser217 is the Rhodanese domain. Cys177 functions as the Cysteine persulfide intermediate in the catalytic mechanism. Residues Leu310–Ile330 are disordered. Residues Gln317–Ile330 show a composition bias toward basic and acidic residues.

This sequence belongs to the TrhO family.

The enzyme catalyses uridine(34) in tRNA + AH2 + O2 = 5-hydroxyuridine(34) in tRNA + A + H2O. In terms of biological role, catalyzes oxygen-dependent 5-hydroxyuridine (ho5U) modification at position 34 in tRNAs. The sequence is that of tRNA uridine(34) hydroxylase from Francisella philomiragia subsp. philomiragia (strain ATCC 25017 / CCUG 19701 / FSC 153 / O#319-036).